A 2273-amino-acid polypeptide reads, in one-letter code: Acetyl-CoA carboxylase, mitochondrial (2273 aa).

A mitochondrion-targeting transit peptide spans 1–104 (KGKTITHGQS…RGNIHKHTRL (104 aa)). Residues 134-635 (VISKILIANN…STGWLDDLIL (502 aa)) enclose the Biotin carboxylation domain. Residues 292–484 (KTNFVSVPDD…LPATQLQIAM (193 aa)) form the ATP-grasp domain. Residue 332-337 (GGGGKG) coordinates ATP. Arg-459 is a catalytic residue. A Biotinyl-binding domain is found at 763 to 837 (LEAELNPTQV…EAGDVIAKLT (75 aa)). Lys-804 is modified (N6-biotinyllysine). The CoA carboxyltransferase N-terminal domain maps to 1532 to 1867 (PYSVKDWLQP…KRDMSPPLLE (336 aa)). Positions 1532-2187 (PYSVKDWLQP…EGQVIKRLQK (656 aa)) are carboxyltransferase. Arg-1776, Lys-2080, and Arg-2082 together coordinate CoA. The CoA carboxyltransferase C-terminal domain occupies 1871 to 2187 (RWDRDVDFKP…EGQVIKRLQK (317 aa)).

Biotin serves as cofactor.

It localises to the mitochondrion. The enzyme catalyses hydrogencarbonate + acetyl-CoA + ATP = malonyl-CoA + ADP + phosphate + H(+). It carries out the reaction N(6)-biotinyl-L-lysyl-[protein] + hydrogencarbonate + ATP = N(6)-carboxybiotinyl-L-lysyl-[protein] + ADP + phosphate + H(+). The protein operates within lipid metabolism; malonyl-CoA biosynthesis; malonyl-CoA from acetyl-CoA: step 1/1. In terms of biological role, catalyzes the rate-limiting reaction in the mitochondrial fatty acid synthesis (FAS) type II pathway. Responsible for the production of the mitochondrial malonyl-CoA, used for the biosynthesis of the cofactor lipoic acid. This protein carries three functions: biotin carboxyl carrier protein, biotin carboxylase, and carboxyltransferase. This Saccharomyces cerevisiae (strain ATCC 204508 / S288c) (Baker's yeast) protein is Acetyl-CoA carboxylase, mitochondrial (HFA1).